The sequence spans 468 residues: Probable soluble pyridine nucleotide transhydrogenase (468 aa).

FAD is bound at residue 33 to 42 (ERGRMLGGVC).

The protein belongs to the class-I pyridine nucleotide-disulfide oxidoreductase family. FAD serves as cofactor.

It is found in the cytoplasm. The enzyme catalyses NAD(+) + NADPH = NADH + NADP(+). Functionally, conversion of NADPH, generated by peripheral catabolic pathways, to NADH, which can enter the respiratory chain for energy generation. This chain is Probable soluble pyridine nucleotide transhydrogenase (sthA), found in Mycobacterium bovis (strain ATCC BAA-935 / AF2122/97).